We begin with the raw amino-acid sequence, 161 residues long: MPQNASVIITQATAVITGSFLSGLMMGLSVVDIPVVLDTATQASQLLQHFTRLYDIGHKMMPSLAVTTCLLYGYTASSTRTTGGSGLPHIIAAVTTISMVPFTWLVMAPTNNALFRMHANPAAANLGEVRRLLVRWAQLHAVRSLFPLMGSVLGLRQILRE.

The N-linked (GlcNAc...) asparagine glycan is linked to asparagine 4. The next 4 helical transmembrane spans lie at 15–35 (VITG…DIPV), 56–74 (IGHK…LYGY), 87–107 (LPHI…WLVM), and 136–155 (WAQL…VLGL).

This sequence belongs to the anthrone oxygenase family. As to expression, specifically expressed in conidia.

The protein localises to the membrane. The enzyme catalyses emodin anthrone + O2 = emodin + H2O + H(+). It participates in secondary metabolite biosynthesis. In terms of biological role, anthrone oxygenase; part of the gene cluster that mediates the biosynthesis of trypacidin, a mycotoxin with antiprotozoal activity and that plays a role in the infection process. The pathway begins with the synthesis of atrochrysone thioester by the polyketide synthase (PKS) tpcC. The atrochrysone carboxyl ACP thioesterase tpcB then breaks the thioester bond and releases the atrochrysone carboxylic acid from tpcC. The decarboxylase tpcK converts atrochrysone carboxylic acid to atrochrysone which is further reduced into emodin anthrone. The next step is performed by the emodin anthrone oxygenase tpcL that catalyzes the oxidation of emodinanthrone to emodin. Emodin O-methyltransferase encoded by tpcA catalyzes methylation of the 8-hydroxy group of emodin to form questin. Ring cleavage of questin by questin oxidase tpcI leads to desmethylsulochrin via several intermediates including questin epoxide. Another methylation step catalyzed by tpcM leads to the formation of sulochrin which is further converted to monomethylsulfochrin by tpcH. Finally, the tpcJ catalyzes the conversion of monomethylsulfochrin to trypacidin. Trypacidin is toxic for human pulmonary and bronchial epithelial cells by initiating the intracellular formation of nitric oxide (NO) and hydrogen peroxide (H(2)O(2)), thus triggering host necrotic cell death. The trypacidin pathway is also able to produce endocrocin via a distinct route from the endocrocin Enc pathway. The chain is Anthrone oxygenase tpcL from Aspergillus fumigatus (strain ATCC MYA-4609 / CBS 101355 / FGSC A1100 / Af293) (Neosartorya fumigata).